A 308-amino-acid polypeptide reads, in one-letter code: Electron transfer flavoprotein subunit alpha (308 aa).

252–280 (LYVAVGISGAIQHLAGMKDSKVIVAINKD) contacts FAD.

This sequence belongs to the ETF alpha-subunit/FixB family. In terms of assembly, heterodimer of an alpha and a beta subunit. The cofactor is FAD.

Its function is as follows. The electron transfer flavoprotein serves as a specific electron acceptor for other dehydrogenases. It transfers the electrons to the main respiratory chain via ETF-ubiquinone oxidoreductase (ETF dehydrogenase). The sequence is that of Electron transfer flavoprotein subunit alpha (etfA) from Paracoccus denitrificans.